The chain runs to 216 residues: ATP-dependent Clp protease proteolytic subunit (216 aa).

S120 (nucleophile) is an active-site residue. H145 is a catalytic residue.

The protein belongs to the peptidase S14 family. In terms of assembly, fourteen ClpP subunits assemble into 2 heptameric rings which stack back to back to give a disk-like structure with a central cavity, resembling the structure of eukaryotic proteasomes.

The protein resides in the cytoplasm. The catalysed reaction is Hydrolysis of proteins to small peptides in the presence of ATP and magnesium. alpha-casein is the usual test substrate. In the absence of ATP, only oligopeptides shorter than five residues are hydrolyzed (such as succinyl-Leu-Tyr-|-NHMec, and Leu-Tyr-Leu-|-Tyr-Trp, in which cleavage of the -Tyr-|-Leu- and -Tyr-|-Trp bonds also occurs).. Cleaves peptides in various proteins in a process that requires ATP hydrolysis. Has a chymotrypsin-like activity. Plays a major role in the degradation of misfolded proteins. This Cupriavidus pinatubonensis (strain JMP 134 / LMG 1197) (Cupriavidus necator (strain JMP 134)) protein is ATP-dependent Clp protease proteolytic subunit.